A 311-amino-acid polypeptide reads, in one-letter code: Aspartate carbamoyltransferase catalytic subunit (311 aa).

Carbamoyl phosphate is bound by residues arginine 55 and threonine 56. Lysine 85 serves as a coordination point for L-aspartate. 3 residues coordinate carbamoyl phosphate: arginine 106, histidine 135, and glutamine 138. L-aspartate is bound by residues arginine 168 and arginine 230. The carbamoyl phosphate site is built by leucine 268 and proline 269.

Belongs to the aspartate/ornithine carbamoyltransferase superfamily. ATCase family. In terms of assembly, heterododecamer (2C3:3R2) of six catalytic PyrB chains organized as two trimers (C3), and six regulatory PyrI chains organized as three dimers (R2).

It catalyses the reaction carbamoyl phosphate + L-aspartate = N-carbamoyl-L-aspartate + phosphate + H(+). The protein operates within pyrimidine metabolism; UMP biosynthesis via de novo pathway; (S)-dihydroorotate from bicarbonate: step 2/3. Functionally, catalyzes the condensation of carbamoyl phosphate and aspartate to form carbamoyl aspartate and inorganic phosphate, the committed step in the de novo pyrimidine nucleotide biosynthesis pathway. The protein is Aspartate carbamoyltransferase catalytic subunit of Yersinia pestis.